The sequence spans 743 residues: Putative pre-mRNA-splicing factor ATP-dependent RNA helicase DHX32 (743 aa).

Met-1 bears the N-acetylmethionine mark. A disordered region spans residues Met-1 to Asp-28. Residues Met-72–Lys-238 form the Helicase ATP-binding domain. Gly-85 to Ser-92 is an ATP binding site. The short motif at Asp-185–His-188 is the DEAH box element.

The protein belongs to the DEAD box helicase family. DEAH subfamily. In terms of tissue distribution, expressed in lymphoid tissues (at protein level). Expressed in brain, heart, skeletal muscle, colon, thymus, spleen, kidney, liver, small intestine, placenta, lung, lymphoid tissues and blood leukocytes.

The protein resides in the nucleus. The protein localises to the mitochondrion. The catalysed reaction is ATP + H2O = ADP + phosphate + H(+). In Homo sapiens (Human), this protein is Putative pre-mRNA-splicing factor ATP-dependent RNA helicase DHX32 (DHX32).